Reading from the N-terminus, the 224-residue chain is Prolactin-2C3 (224 aa).

The signal sequence occupies residues M1 to S29. A glycan (N-linked (GlcNAc...) asparagine) is linked at N19. A disulfide bond links C33 and C40. 3 N-linked (GlcNAc...) asparagine glycosylation sites follow: N57, N75, and N88. 2 disulfide bridges follow: C87–C199 and C216–C224.

Belongs to the somatotropin/prolactin family. In terms of processing, N-glycosylated and sialylated. Expressed in placenta and hair follicles, with highest expression levels detected in the outer root sheath and no expression detected in bulb. Expressed in placenta, skin wounds, keratinocytes and weakly in embryonic fibroblasts. Expressed in brain, cerebellum and in Neuro-2a cell line. Not detected in liver, kidney, ovary, pituitary gland and brain.

It localises to the secreted. The protein resides in the endoplasmic reticulum. In terms of biological role, may have a role in embryonic development. It is likely to provide a growth stimulus to target cells in maternal and fetal tissues during the development of the embryo at mid-gestation. May play a role during wound healing and in the hair follicle cycle as a growth factor and/or an angiogenesis factor. May play a role in microvilli formation and cell proliferation of neuroblastoma cells. This Mus musculus (Mouse) protein is Prolactin-2C3 (Prl2c3).